A 73-amino-acid polypeptide reads, in one-letter code: Translation initiation factor IF-1 (73 aa).

In terms of domain architecture, S1-like spans 1–73; it reads MANKEELIEF…SKGRITYRAR (73 aa).

The protein belongs to the IF-1 family. In terms of assembly, component of the 30S ribosomal translation pre-initiation complex which assembles on the 30S ribosome in the order IF-2 and IF-3, IF-1 and N-formylmethionyl-tRNA(fMet); mRNA recruitment can occur at any time during PIC assembly.

Its subcellular location is the cytoplasm. In terms of biological role, one of the essential components for the initiation of protein synthesis. Stabilizes the binding of IF-2 and IF-3 on the 30S subunit to which N-formylmethionyl-tRNA(fMet) subsequently binds. Helps modulate mRNA selection, yielding the 30S pre-initiation complex (PIC). Upon addition of the 50S ribosomal subunit IF-1, IF-2 and IF-3 are released leaving the mature 70S translation initiation complex. The protein is Translation initiation factor IF-1 of Acinetobacter baylyi (strain ATCC 33305 / BD413 / ADP1).